Consider the following 438-residue polypeptide: RING finger protein 150 (438 aa).

The N-terminal stretch at 1-34 (MAMSLIQACCSLALSTWLLSFCFVHLLCLDFTVA) is a signal peptide. The Extracellular portion of the chain corresponds to 35-208 (EKEEWYTAFV…NLQKYVSRTS (174 aa)). 4 N-linked (GlcNAc...) asparagine glycosylation sites follow: Asn45, Asn125, Asn153, and Asn186. The region spanning 81-183 (SPKQDARGEV…PKGKEIVSLL (103 aa)) is the PA domain. The helical transmembrane segment at 209–229 (VVFVSISFIVLMIISLAWLVF) threads the bilayer. Residues 230–438 (YYIQRFRYAN…TDQDCEEVKS (209 aa)) are Cytoplasmic-facing. The RING-type; atypical zinc finger occupies 278–319 (CAVCIEGYKPNDVVRILPCRHLFHKSCVDPWLLDHRTCPMCK).

The protein localises to the membrane. This chain is RING finger protein 150 (RNF150), found in Homo sapiens (Human).